Consider the following 199-residue polypeptide: V-type ATP synthase subunit E (199 aa).

It belongs to the V-ATPase E subunit family.

Functionally, produces ATP from ADP in the presence of a proton gradient across the membrane. The polypeptide is V-type ATP synthase subunit E (Clostridium botulinum (strain Hall / ATCC 3502 / NCTC 13319 / Type A)).